A 1828-amino-acid chain; its full sequence is InaD-like protein (1828 aa).

The L27 domain occupies 5–65 (PAPDKLQVLQ…SIKQLKGQLS (61 aa)). PDZ domains are found at residues 134–221 (YIDI…AREP), 248–328 (DVEL…ARDP), and 365–453 (GVEL…VRRK). A phosphoserine mark is found at Ser459 and Ser522. One can recognise a PDZ 4 domain in the interval 553–639 (DAELQKYSKL…PFTLVCCRRL (87 aa)). A Phosphoserine modification is found at Ser645. PDZ domains lie at 686–758 (IVEL…EVLK) and 1070–1162 (IVEI…QSLS). Residues 1168 to 1220 (IPSVHNKANKIANNQDQNTEEKKEKRQGTPPPPMKLPPPYKAPSDDSDENEEE) form a disordered region. Pro residues predominate over residues 1196–1208 (TPPPPMKLPPPYK). The residue at position 1211 (Ser1211) is a Phosphoserine. A PDZ 7 domain is found at 1241–1324 (IIELEKDKNG…KVKLVFIRNE (84 aa)). Positions 1333 to 1362 (APFPVPSSSPSSLEDQSGTEPVSSEEDGSL) are disordered. Over residues 1345-1354 (LEDQSGTEPV) the composition is skewed to polar residues. PDZ domains follow at residues 1464 to 1547 (IIEI…YRDE) and 1560 to 1642 (PVDL…GRLR). Thr1535 is modified (phosphothreonine). Residues 1645–1668 (SWTSSRKTSQNSQGSQHSTHSSFH) show a composition bias toward polar residues. The disordered stretch occupies residues 1645–1669 (SWTSSRKTSQNSQGSQHSTHSSFHP). The 87-residue stretch at 1703–1789 (TVEIIRELSD…RIILQVVADT (87 aa)) folds into the PDZ 10 domain. The disordered stretch occupies residues 1805–1828 (YHLGSPTAEHHPEDTEEPLQMTAG).

In terms of assembly, forms a ternary complex with PALS1 and CRB1. Component of a complex whose core is composed of ARHGAP17, AMOT, PALS1, INADL/PATJ and PARD3/PAR3. Forms a heterotrimeric complex composed of MMP5, LIN7B and PATJ; the N-terminal L27 domain of PALS1 interacts with the L27 domain of PATJ and the C-terminal L27 domain of PALS1 interacts with the L27 domain of LIN7B. Component of a complex composed of CRB3, PALS1 and PATJ. As part of the Crumbs complex; interacts with WWP1, the interaction is enhanced by AMOTL2 and facilitates WWP1 localization to the plasma membrane. The Crumbs complex promotes monoubiquitination of AMOTL2 by WWP1, which activates the Hippo signaling pathway. Interacts (via N-terminus) with PALS1/PALS (via PDZ domain). Interacts with TJP3/ZO-3 and CLDN1/claudin-1. Interacts with ASIC3, KCNJ10, KCNJ15, GRIN2A, GRIN2B, GRIN2C, GRIN2D, NLGN2, and HTR2A. Interacts with MPP7. Directly interacts with HTR4. Interacts (via PDZ domain 8) with WWC1 (via the ADDV motif). Interacts with SLC6A4. Interacts (via C-terminus) with ARHGEF18. Interacts with NPHP1. Interacts with PARD3/PAR3. Interacts (via PDZ1-6 domains) with TJP1/ZO1; the interaction is required for attachment and extension of TJP1/ZO1 condensates along the apical cell interface.

The protein localises to the cell junction. It localises to the tight junction. The protein resides in the apical cell membrane. It is found in the cytoplasm. Its subcellular location is the perinuclear region. In terms of biological role, scaffolding protein that facilitates the localization of proteins to the cell membrane. Required for the correct formation of tight junctions and epithelial apico-basal polarity. Acts (via its L27 domain) as an apical connector and elongation factor for multistranded TJP1/ZO1 condensates that form a tight junction belt, thereby required for the formation of the tight junction-mediated cell barrier. Positively regulates epithelial cell microtubule elongation and cell migration, possibly via facilitating localization of PRKCI/aPKC and PAR3D/PAR3 at the leading edge of migrating cells. Plays a role in the correct reorientation of the microtubule-organizing center during epithelial migration. May regulate the surface expression and/or function of ASIC3 in sensory neurons. May recruit ARHGEF18 to apical cell-cell boundaries. The protein is InaD-like protein of Canis lupus familiaris (Dog).